Reading from the N-terminus, the 75-residue chain is Small ribosomal subunit protein bS18 (75 aa).

The protein belongs to the bacterial ribosomal protein bS18 family. As to quaternary structure, part of the 30S ribosomal subunit. Forms a tight heterodimer with protein bS6.

Binds as a heterodimer with protein bS6 to the central domain of the 16S rRNA, where it helps stabilize the platform of the 30S subunit. In Chromobacterium violaceum (strain ATCC 12472 / DSM 30191 / JCM 1249 / CCUG 213 / NBRC 12614 / NCIMB 9131 / NCTC 9757 / MK), this protein is Small ribosomal subunit protein bS18.